Here is a 632-residue protein sequence, read N- to C-terminus: 1-deoxy-D-xylulose-5-phosphate synthase (632 aa).

Thiamine diphosphate is bound by residues histidine 87 and 128–130 (GHS). Mg(2+) is bound at residue aspartate 159. Thiamine diphosphate is bound by residues 160–161 (GA), asparagine 188, phenylalanine 295, and glutamate 378. Mg(2+) is bound at residue asparagine 188.

Belongs to the transketolase family. DXPS subfamily. In terms of assembly, homodimer. Mg(2+) is required as a cofactor. The cofactor is thiamine diphosphate.

It catalyses the reaction D-glyceraldehyde 3-phosphate + pyruvate + H(+) = 1-deoxy-D-xylulose 5-phosphate + CO2. The protein operates within metabolic intermediate biosynthesis; 1-deoxy-D-xylulose 5-phosphate biosynthesis; 1-deoxy-D-xylulose 5-phosphate from D-glyceraldehyde 3-phosphate and pyruvate: step 1/1. Functionally, catalyzes the acyloin condensation reaction between C atoms 2 and 3 of pyruvate and glyceraldehyde 3-phosphate to yield 1-deoxy-D-xylulose-5-phosphate (DXP). This chain is 1-deoxy-D-xylulose-5-phosphate synthase, found in Pseudomonas fluorescens (strain SBW25).